The primary structure comprises 144 residues: uncharacterized protein (144 aa).

The disordered stretch occupies residues P98 to L127.

This is an uncharacterized protein from Aedes vexans (Inland floodwater mosquito).